Consider the following 130-residue polypeptide: Small ribosomal subunit protein uS8B (130 aa).

The protein belongs to the universal ribosomal protein uS8 family.

This is Small ribosomal subunit protein uS8B (RpS15Ab) from Drosophila melanogaster (Fruit fly).